The following is a 395-amino-acid chain: uncharacterized protein (395 aa).

Helical transmembrane passes span 42–62, 67–87, 97–117, 128–148, 196–216, 241–261, and 281–301; these read LKYVLVYLLSIINAFLLLIFI, LYSFGISSLTQGFARLVFVLL, LIFNILYWLLYVFINIPLIIF, ILSTHFVVASNVFGFLISIIP, FIYAAIYGFYNGISVSLLYIL, ILFYVNSFILIIAILIGSFVA, and LFFSPNLIATFFSILLTGTVV.

It localises to the cell membrane. This is an uncharacterized protein from Mycoplasma genitalium (strain ATCC 33530 / DSM 19775 / NCTC 10195 / G37) (Mycoplasmoides genitalium).